The following is a 317-amino-acid chain: uncharacterized protein (317 aa).

Low complexity predominate over residues 68-78 (DSTNTDISNET). The disordered stretch occupies residues 68–87 (DSTNTDISNETPILSNNTPI).

This is an uncharacterized protein from Methanocaldococcus jannaschii (strain ATCC 43067 / DSM 2661 / JAL-1 / JCM 10045 / NBRC 100440) (Methanococcus jannaschii).